Consider the following 354-residue polypeptide: Phospho-N-acetylmuramoyl-pentapeptide-transferase (354 aa).

10 helical membrane passes run 23–43 (FSFF…IAWA), 66–86 (TPTM…LLCA), 88–108 (LDNV…ALGF), 130–150 (LAVQ…HGEL), 161–181 (FALL…IVAA), 193–213 (GLAS…AYIC), 230–250 (VGET…FLWF), 257–277 (VFMG…MGVM), 282–302 (ILLI…ILQV), and 331–351 (KIIV…LTAL).

The protein belongs to the glycosyltransferase 4 family. MraY subfamily. The cofactor is Mg(2+).

The protein localises to the cell inner membrane. It catalyses the reaction UDP-N-acetyl-alpha-D-muramoyl-L-alanyl-gamma-D-glutamyl-meso-2,6-diaminopimeloyl-D-alanyl-D-alanine + di-trans,octa-cis-undecaprenyl phosphate = di-trans,octa-cis-undecaprenyl diphospho-N-acetyl-alpha-D-muramoyl-L-alanyl-D-glutamyl-meso-2,6-diaminopimeloyl-D-alanyl-D-alanine + UMP. Its pathway is cell wall biogenesis; peptidoglycan biosynthesis. Its function is as follows. Catalyzes the initial step of the lipid cycle reactions in the biosynthesis of the cell wall peptidoglycan: transfers peptidoglycan precursor phospho-MurNAc-pentapeptide from UDP-MurNAc-pentapeptide onto the lipid carrier undecaprenyl phosphate, yielding undecaprenyl-pyrophosphoryl-MurNAc-pentapeptide, known as lipid I. The chain is Phospho-N-acetylmuramoyl-pentapeptide-transferase from Campylobacter curvus (strain 525.92).